Consider the following 158-residue polypeptide: MGRFISVSFGLLVVFLSLSGTGAGLDCPPDSSLYRYFCYRVFKEHKTWEAAERFCMEHPNNGHLVSIESMEEAEFVAKLLSNTTGKFITHFWIGLMIKDKEQECSSEWSDGSSVSYDKLGKQEFRKCFVLEKESGYRMWFNRNCEERYLFVCKVPPEC.

The first 24 residues, 1–24 (MGRFISVSFGLLVVFLSLSGTGAG), serve as a signal peptide directing secretion. Cystine bridges form between Cys27–Cys38, Cys55–Cys152, and Cys127–Cys144. One can recognise a C-type lectin domain in the interval 34 to 153 (YRYFCYRVFK…CEERYLFVCK (120 aa)). N-linked (GlcNAc...) (complex) asparagine glycosylation is present at Asn82.

The protein belongs to the snaclec family. In terms of assembly, heterotrimer; disulfide-linked. The heterotrimer consists of 1 heavy chain (a metalloproteinase) and 2 light chains: LC1 and LC2. Post-translationally, N-glycosylated; probably required for conformation. Removal of easily accessible sugars does not change its functional capacity, but removal of the core sugars with N-glycanase causes a virtually complete loss of enzyme activity, apparently as a result of major conformational changes in the molecule. Not O-glycosylated. In terms of tissue distribution, expressed by the venom gland.

Its subcellular location is the secreted. Its function is as follows. Regulatory subunit of the blood coagulation factor X- and IX-activating enzyme. The enzyme activates coagulation factor X (F10) by cleaving the Arg-Ile bond and is also able to activate coagulation factor IX (F9) and protein S (PROS1) by specific cleavage of Arg-Ile and Arg-Val bonds. May serve as an exosite by which the enzyme recognizes and binds to the Gla domain of factor X (F10) and factor IX (F9) in a calcium-dependent manner. This chain is Snaclec coagulation factor X-activating enzyme light chain 2 (LC2), found in Daboia siamensis (Eastern Russel's viper).